Consider the following 146-residue polypeptide: Endoribonuclease YbeY (146 aa).

Zn(2+) is bound by residues His108, His112, and His118.

It belongs to the endoribonuclease YbeY family. The cofactor is Zn(2+).

It is found in the cytoplasm. In terms of biological role, single strand-specific metallo-endoribonuclease involved in late-stage 70S ribosome quality control and in maturation of the 3' terminus of the 16S rRNA. This is Endoribonuclease YbeY from Onion yellows phytoplasma (strain OY-M).